Consider the following 230-residue polypeptide: Large ribosomal subunit protein uL1 (230 aa).

This sequence belongs to the universal ribosomal protein uL1 family. Part of the 50S ribosomal subunit.

In terms of biological role, binds directly to 23S rRNA. The L1 stalk is quite mobile in the ribosome, and is involved in E site tRNA release. Functionally, protein L1 is also a translational repressor protein, it controls the translation of the L11 operon by binding to its mRNA. This Bacillus cereus (strain G9842) protein is Large ribosomal subunit protein uL1.